We begin with the raw amino-acid sequence, 357 residues long: Inner membrane protein YcfT (357 aa).

The Cytoplasmic portion of the chain corresponds to 1–12; that stretch reads MKQKELWINQIK. The chain crosses the membrane as a helical span at residues 13–33; sequence GLCICLVVIYHSVITFYPHLT. Residues 34-49 are Periplasmic-facing; it reads TFQHPLSEVLSKCWIY. Residues 50–70 traverse the membrane as a helical segment; sequence FNLYLAPFRMPVFFFISGYLI. Residues 71 to 86 lie on the Cytoplasmic side of the membrane; the sequence is RRYIDSVPWGNCLDKR. A helical transmembrane segment spans residues 87–107; that stretch reads IWNIFWVLALWGVVQWLALSA. Residues 108–135 are Periplasmic-facing; that stretch reads LNQWLAPERDLSNASNAAYADSTGEFLH. The chain crosses the membrane as a helical span at residues 136–156; it reads GMITASTSLWYLYALIVYFVV. At 157 to 162 the chain is on the cytoplasmic side; that stretch reads CKIFSR. The helical transmembrane segment at 163–183 threads the bilayer; sequence LALPLFALFVLLSVAVNFVPT. Topologically, residues 184-196 are periplasmic; sequence PWWGMNSVIRNLP. The helical transmembrane segment at 197-217 threads the bilayer; it reads YYSLGAWFGATIMTCVKEVPL. The Cytoplasmic portion of the chain corresponds to 218 to 231; it reads RRHLLMASLLTVLA. The helical transmembrane segment at 232–252 threads the bilayer; sequence VGAWLFTISLLLSLVSIVVIM. At 253 to 310 the chain is on the periplasmic side; it reads KLFYQYEQRFGMRSTSLLNVIGSNTIAIYTTHRILVEIFSLTLLAQMNAARWSPQVEL. A helical membrane pass occupies residues 311 to 331; that stretch reads TLLLVYPFVSLFICTVAGLLV. The Cytoplasmic segment spans residues 332–357; the sequence is RKLSQRAFSDLLFSPPSLPAAVSYSR.

This sequence belongs to the acyltransferase 3 family.

It localises to the cell inner membrane. This chain is Inner membrane protein YcfT (ycfT), found in Escherichia coli (strain K12).